We begin with the raw amino-acid sequence, 464 residues long: NADH-quinone oxidoreductase subunit N (464 aa).

The next 13 membrane-spanning stretches (helical) occupy residues 5–25, 31–51, 63–83, 96–116, 117–137, 152–172, 188–208, 242–262, 286–303, 312–332, 358–378, 393–415, and 436–456; these read MLLALLPLLVLFGGSITVLFL, LLSAAMCAVVAAGFAWWPASL, LFARGCLTLWALLGAATCLLS, EYAALTLFAVLGMAILSASTS, LVSLFLGLESMTLAFYVLIAV, LLPGFLASALLAFGIALVYAA, GAPMPSIALLGWTLIMAAAAF, VFAVLLGSAPLALIVPLRPLL, MLAYSSVVHMGYLVLAVL, AGLFYLLTYSAATVGTFGLLA, AVLLTGLLLSLAGFPPLAGFM, VGLVVLALLSSLISCYYYLRPVL, and LIFVLCAGVTLVAGLYPGPFF.

This sequence belongs to the complex I subunit 2 family. NDH-1 is composed of 14 different subunits. Subunits NuoA, H, J, K, L, M, N constitute the membrane sector of the complex.

It is found in the cell inner membrane. It catalyses the reaction a quinone + NADH + 5 H(+)(in) = a quinol + NAD(+) + 4 H(+)(out). In terms of biological role, NDH-1 shuttles electrons from NADH, via FMN and iron-sulfur (Fe-S) centers, to quinones in the respiratory chain. The immediate electron acceptor for the enzyme in this species is believed to be ubiquinone. Couples the redox reaction to proton translocation (for every two electrons transferred, four hydrogen ions are translocated across the cytoplasmic membrane), and thus conserves the redox energy in a proton gradient. This chain is NADH-quinone oxidoreductase subunit N, found in Syntrophotalea carbinolica (strain DSM 2380 / NBRC 103641 / GraBd1) (Pelobacter carbinolicus).